Reading from the N-terminus, the 420-residue chain is Histidine--tRNA ligase (420 aa).

This sequence belongs to the class-II aminoacyl-tRNA synthetase family. As to quaternary structure, homodimer.

Its subcellular location is the cytoplasm. It catalyses the reaction tRNA(His) + L-histidine + ATP = L-histidyl-tRNA(His) + AMP + diphosphate + H(+). The protein is Histidine--tRNA ligase of Thermotoga sp. (strain RQ2).